The following is a 1068-amino-acid chain: Huntingtin-interacting protein 1-related protein (1068 aa).

At Met1 the chain carries N-acetylmethionine. Residues 23–151 (EREQFDKTQA…SFHLKHPQFP (129 aa)) form the ENTH domain. Positions 347-599 (SVKDDRDLQI…RSSQEQGELQ (253 aa)) form a coiled coil. Disordered regions lie at residues 424–443 (LEGE…ASAT), 529–549 (ARAQ…SSRL), and 582–608 (AALS…RESQ). Composition is skewed to basic and acidic residues over residues 425-443 (EGER…ASAT) and 539-549 (EQSKSELSSRL). The segment covering 590–600 (RSSQEQGELQG) has biased composition (low complexity). Residues 771–1012 (SLDVRQEELG…ELRKQHYVLA (242 aa)) enclose the I/LWEQ domain. The segment at 867 to 924 (RWTEGLISASKAVGWGATQLVEAADKVVLHTGKYEELIVCSHEIAASTAQLVAASKVK) is important for actin binding. The interval 1016-1060 (GSPGEEVAIRPSTAPRSVTTKKPPLAQKPSVAPRQDHQLDKKDGI) is disordered. A Phosphoserine modification is found at Ser1017. A compositionally biased stretch (basic and acidic residues) spans 1049-1059 (RQDHQLDKKDG).

It belongs to the SLA2 family. In terms of assembly, homodimer. Interacts with actin; homodimerization promotes actin binding. Interacts with CLTB. Interacts with HIP1. Interacts (via ENTH and I/LWEQ domains) with BCL2L10. As to expression, brain, heart, kidney, pancreas, and liver, but not in lung or placenta.

Its subcellular location is the cytoplasm. The protein resides in the perinuclear region. It is found in the endomembrane system. It localises to the cytoplasmic vesicle. The protein localises to the clathrin-coated vesicle membrane. Its function is as follows. Component of clathrin-coated pits and vesicles, that may link the endocytic machinery to the actin cytoskeleton. Binds 3-phosphoinositides (via ENTH domain). May act through the ENTH domain to promote cell survival by stabilizing receptor tyrosine kinases following ligand-induced endocytosis. The chain is Huntingtin-interacting protein 1-related protein (HIP1R) from Homo sapiens (Human).